The following is a 180-amino-acid chain: NADH-quinone oxidoreductase subunit I (180 aa).

4Fe-4S ferredoxin-type domains are found at residues 50–80 and 90–119; these read LTRDPDGEERCVACNLCAVACPVGCISLQKT and EFFRINFSRCIFCGLCEEACPTTAIQLTPD. Positions 60, 63, 66, 70, 99, 102, 105, and 109 each coordinate [4Fe-4S] cluster.

Belongs to the complex I 23 kDa subunit family. As to quaternary structure, NDH-1 is composed of 13 different subunits. Subunits NuoA, H, J, K, L, M, N constitute the membrane sector of the complex. [4Fe-4S] cluster serves as cofactor.

The protein localises to the cell inner membrane. It carries out the reaction a quinone + NADH + 5 H(+)(in) = a quinol + NAD(+) + 4 H(+)(out). NDH-1 shuttles electrons from NADH, via FMN and iron-sulfur (Fe-S) centers, to quinones in the respiratory chain. The immediate electron acceptor for the enzyme in this species is believed to be ubiquinone. Couples the redox reaction to proton translocation (for every two electrons transferred, four hydrogen ions are translocated across the cytoplasmic membrane), and thus conserves the redox energy in a proton gradient. The polypeptide is NADH-quinone oxidoreductase subunit I (Shigella dysenteriae serotype 1 (strain Sd197)).